The chain runs to 150 residues: SsrA-binding protein (150 aa).

This sequence belongs to the SmpB family.

Its subcellular location is the cytoplasm. Its function is as follows. Required for rescue of stalled ribosomes mediated by trans-translation. Binds to transfer-messenger RNA (tmRNA), required for stable association of tmRNA with ribosomes. tmRNA and SmpB together mimic tRNA shape, replacing the anticodon stem-loop with SmpB. tmRNA is encoded by the ssrA gene; the 2 termini fold to resemble tRNA(Ala) and it encodes a 'tag peptide', a short internal open reading frame. During trans-translation Ala-aminoacylated tmRNA acts like a tRNA, entering the A-site of stalled ribosomes, displacing the stalled mRNA. The ribosome then switches to translate the ORF on the tmRNA; the nascent peptide is terminated with the 'tag peptide' encoded by the tmRNA and targeted for degradation. The ribosome is freed to recommence translation, which seems to be the essential function of trans-translation. This Coprothermobacter proteolyticus (strain ATCC 35245 / DSM 5265 / OCM 4 / BT) protein is SsrA-binding protein.